The primary structure comprises 250 residues: N-acyl homoserine lactonase (250 aa).

Residues His-104, His-106, Asp-108, His-109, His-169, Asp-191, and His-235 each coordinate Zn(2+).

This sequence belongs to the metallo-beta-lactamase superfamily. In terms of assembly, monomer. Zn(2+) is required as a cofactor.

It carries out the reaction an N-acyl-L-homoserine lactone + H2O = an N-acyl-L-homoserine + H(+). With respect to regulation, completely inhibited by Cu(2+) and Ag(+). Partially inhibited by Cr(2+), Pb(2+) and Fe(2+). Mg(2+), Ca(2+), Mn(2+), Co(2+), Ni(2+), Zn(2+) and Cd(2+) have no effect on activity. The chelating agents EDTA, 2,2'bipyridine and o-phenanthroline have no effect on enzyme activity. In terms of biological role, hydrolyzes acyl homoserine lactones with varying lengths of acyl chains, with a slight preference for substrates without 3-oxo substitution at the C3 position. Has only residual activity towards non-acyl lactones, and no activity towards non-cyclic esters. The protein is N-acyl homoserine lactonase of Bacillus sp.